A 118-amino-acid chain; its full sequence is Ribosome-binding factor A (118 aa).

The protein belongs to the RbfA family. As to quaternary structure, monomer. Binds 30S ribosomal subunits, but not 50S ribosomal subunits or 70S ribosomes.

The protein resides in the cytoplasm. In terms of biological role, one of several proteins that assist in the late maturation steps of the functional core of the 30S ribosomal subunit. Associates with free 30S ribosomal subunits (but not with 30S subunits that are part of 70S ribosomes or polysomes). Required for efficient processing of 16S rRNA. May interact with the 5'-terminal helix region of 16S rRNA. In Thermodesulfovibrio yellowstonii (strain ATCC 51303 / DSM 11347 / YP87), this protein is Ribosome-binding factor A.